We begin with the raw amino-acid sequence, 420 residues long: Protein STB1 (420 aa).

The residue at position 2 (Ser-2) is an N-acetylserine. The interval 2-70 (SQPQMSPEKE…DEDHKTLLEA (69 aa)) is interaction with SWI6. Position 7 is a phosphoserine (Ser-7). Disordered stretches follow at residues 30–187 (QLKL…SDNT) and 273–319 (DSPS…ELNG). The segment covering 43–55 (RKQDSTTKKRSGE) has biased composition (basic and acidic residues). Position 72 is a phosphoserine (Ser-72). Residue Thr-99 is modified to Phosphothreonine. Ser-102 is modified (phosphoserine). A compositionally biased stretch (basic and acidic residues) spans 106-122 (RKAEDRSQQIKPRKEDT). Low complexity predominate over residues 156 to 169 (NNNNSSNHSNNNNN). Residues 277–319 (LYLSNNNGSVQATLSPQQRRKPTTNTLHPPSNVPTTPSRELNG) are compositionally biased toward polar residues. At Thr-419 the chain carries Phosphothreonine.

As to quaternary structure, interacts with the ANK repeats of SWI6. The interaction with SWI6 is required for function. Interacts with SIN3. In terms of processing, phosphorylated by CDC28 in a cell cycle-dependent manner, inhibiting the interaction with SWI6.

The protein localises to the cytoplasm. It localises to the nucleus. Functionally, involved in the regulation and timing of MBF-dependent transcription in late G1 of the cell cycle. This Saccharomyces cerevisiae (strain ATCC 204508 / S288c) (Baker's yeast) protein is Protein STB1 (STB1).